Reading from the N-terminus, the 392-residue chain is Phospho-N-acetylmuramoyl-pentapeptide-transferase (392 aa).

A run of 10 helical transmembrane segments spans residues 29 to 49 (AVLAALTALLIGLAAGSWVIG), 76 to 96 (TMGGVLILLSIALSTLLWFDL), 100 to 120 (FVWIVLLVTLGFGAIGWVDDW), 137 to 157 (YLWQSLIGLMAALYLVFCISE), 192 to 212 (AVSYPLGVLGFVLLTYLVIVG), 225 to 245 (GLAIMPVVMVGSALGVFAYVT), 262 to 282 (SGELLIFCAAMAGAGLAFLWF), 289 to 309 (VFMGDVGALALGAALGTIAII), 314 to 334 (IVLAVMGGIFVAEALSVMLQV), and 369 to 389 (QVVVRFWIITMLLCLVGLSTL).

The protein belongs to the glycosyltransferase 4 family. MraY subfamily. The cofactor is Mg(2+).

It is found in the cell inner membrane. The enzyme catalyses UDP-N-acetyl-alpha-D-muramoyl-L-alanyl-gamma-D-glutamyl-meso-2,6-diaminopimeloyl-D-alanyl-D-alanine + di-trans,octa-cis-undecaprenyl phosphate = di-trans,octa-cis-undecaprenyl diphospho-N-acetyl-alpha-D-muramoyl-L-alanyl-D-glutamyl-meso-2,6-diaminopimeloyl-D-alanyl-D-alanine + UMP. The protein operates within cell wall biogenesis; peptidoglycan biosynthesis. In terms of biological role, catalyzes the initial step of the lipid cycle reactions in the biosynthesis of the cell wall peptidoglycan: transfers peptidoglycan precursor phospho-MurNAc-pentapeptide from UDP-MurNAc-pentapeptide onto the lipid carrier undecaprenyl phosphate, yielding undecaprenyl-pyrophosphoryl-MurNAc-pentapeptide, known as lipid I. This Verminephrobacter eiseniae (strain EF01-2) protein is Phospho-N-acetylmuramoyl-pentapeptide-transferase.